Here is a 362-residue protein sequence, read N- to C-terminus: Adenosine deaminase (362 aa).

Zn(2+)-binding residues include histidine 19 and histidine 21. Substrate is bound by residues histidine 21, aspartate 23, and glycine 181. Histidine 208 contributes to the Zn(2+) binding site. Catalysis depends on glutamate 211, which acts as the Proton donor. Aspartate 300 provides a ligand contact to Zn(2+).

This sequence belongs to the metallo-dependent hydrolases superfamily. Adenosine and AMP deaminases family. Adenosine deaminase subfamily. The cofactor is Zn(2+).

The enzyme catalyses adenosine + H2O + H(+) = inosine + NH4(+). It catalyses the reaction 2'-deoxyadenosine + H2O + H(+) = 2'-deoxyinosine + NH4(+). In terms of biological role, catalyzes the hydrolytic deamination of adenosine and 2-deoxyadenosine. This is Adenosine deaminase from Mycobacterium leprae (strain TN).